Here is a 276-residue protein sequence, read N- to C-terminus: Omega-amidase NIT2 (276 aa).

A CN hydrolase domain is found at 4–248 (FRLALIQLQV…ETILYSDIDL (245 aa)). Residue Ser-26 is modified to Phosphoserine. Glu-43 (proton acceptor) is an active-site residue. Lys-68 bears the N6-acetyllysine; alternate mark. Lys-68 is subject to N6-succinyllysine; alternate. Lys-112 serves as the catalytic Proton donor. Lys-123 and Lys-130 each carry N6-succinyllysine. Cys-153 functions as the Nucleophile in the catalytic mechanism.

The protein belongs to the carbon-nitrogen hydrolase superfamily. NIT1/NIT2 family. As to quaternary structure, homodimer.

The protein localises to the cytoplasm. The catalysed reaction is a monoamide of a dicarboxylate + H2O = a dicarboxylate + NH4(+). It catalyses the reaction 2-oxoglutaramate + H2O = 2-oxoglutarate + NH4(+). The enzyme catalyses 2-oxosuccinamate + H2O = oxaloacetate + NH4(+). In terms of biological role, has omega-amidase activity. The role of omega-amidase is to remove potentially toxic intermediates by converting 2-oxoglutaramate and 2-oxosuccinamate to biologically useful 2-oxoglutarate and oxaloacetate, respectively. Can also hydrolyze gamma-monomethyl-alpha-ketoglutarate in vitro. In Mus musculus (Mouse), this protein is Omega-amidase NIT2.